A 404-amino-acid chain; its full sequence is Cysteine desulfurase IscS (404 aa).

Residues 75-76 (AT), N155, Q183, and 203-205 (SSH) each bind pyridoxal 5'-phosphate. At K206 the chain carries N6-(pyridoxal phosphate)lysine. Residue T243 coordinates pyridoxal 5'-phosphate. The Cysteine persulfide intermediate role is filled by C328. C328 serves as a coordination point for [2Fe-2S] cluster.

This sequence belongs to the class-V pyridoxal-phosphate-dependent aminotransferase family. NifS/IscS subfamily. Homodimer. Forms a heterotetramer with IscU, interacts with other sulfur acceptors. It depends on pyridoxal 5'-phosphate as a cofactor.

It is found in the cytoplasm. The catalysed reaction is (sulfur carrier)-H + L-cysteine = (sulfur carrier)-SH + L-alanine. Its pathway is cofactor biosynthesis; iron-sulfur cluster biosynthesis. Its function is as follows. Master enzyme that delivers sulfur to a number of partners involved in Fe-S cluster assembly, tRNA modification or cofactor biosynthesis. Catalyzes the removal of elemental sulfur atoms from cysteine to produce alanine. Functions as a sulfur delivery protein for Fe-S cluster synthesis onto IscU, an Fe-S scaffold assembly protein, as well as other S acceptor proteins. The protein is Cysteine desulfurase IscS of Histophilus somni (strain 129Pt) (Haemophilus somnus).